The following is a 92-amino-acid chain: Tachykinin-2 (92 aa).

The first 22 residues, 1-22 (MIRVGLILCCIFIVGVFEASSA), serve as a signal peptide directing secretion. Residues 23–37 (DDILTAHNLIKRSEV) constitute a propeptide that is removed on maturation. M49 is modified (methionine amide). Residues 52–92 (SEELTRRLIQHPGSMSETSKRGPPKKGDFNPNELKPESNIC) constitute a propeptide that is removed on maturation. The disordered stretch occupies residues 61 to 92 (QHPGSMSETSKRGPPKKGDFNPNELKPESNIC).

The protein belongs to the tachykinin family. In terms of tissue distribution, expressed in the posterior salivary gland and more specifically in the mucus-secreting gland cells.

It is found in the secreted. Tachykinins are active peptides which excite neurons, evoke behavioral responses, are potent vasodilators and secretagogues, and contract (directly or indirectly) many smooth muscles. The chain is Tachykinin-2 from Octopus vulgaris (Common octopus).